We begin with the raw amino-acid sequence, 147 residues long: Hemoglobin subunit beta (147 aa).

Valine 2 carries the post-translational modification N-acetylvaline. The Globin domain occupies 3–147 (HLSGSEKTAV…VSHALAHKYH (145 aa)). Threonine 13 bears the Phosphothreonine mark. Residue serine 45 is modified to Phosphoserine. N6-acetyllysine is present on lysine 60. Heme b is bound at residue histidine 64. Lysine 83 is subject to N6-acetyllysine. A heme b-binding site is contributed by histidine 93. S-nitrosocysteine is present on cysteine 94. The residue at position 145 (lysine 145) is an N6-acetyllysine.

Belongs to the globin family. Heterotetramer of two alpha chains and two beta chains. As to expression, red blood cells.

Functionally, involved in oxygen transport from the lung to the various peripheral tissues. This Tachyglossus aculeatus aculeatus (Southeast Australian short-beaked echidna) protein is Hemoglobin subunit beta (HBB).